Consider the following 78-residue polypeptide: Exodeoxyribonuclease 7 small subunit (78 aa).

The protein belongs to the XseB family. As to quaternary structure, heterooligomer composed of large and small subunits.

It is found in the cytoplasm. The enzyme catalyses Exonucleolytic cleavage in either 5'- to 3'- or 3'- to 5'-direction to yield nucleoside 5'-phosphates.. In terms of biological role, bidirectionally degrades single-stranded DNA into large acid-insoluble oligonucleotides, which are then degraded further into small acid-soluble oligonucleotides. The sequence is that of Exodeoxyribonuclease 7 small subunit from Oceanobacillus iheyensis (strain DSM 14371 / CIP 107618 / JCM 11309 / KCTC 3954 / HTE831).